Consider the following 278-residue polypeptide: Large ribosomal subunit protein uL2c (278 aa).

The tract at residues 222–241 is disordered; sequence GVVMNPNDHPHGGGEGRSPI.

This sequence belongs to the universal ribosomal protein uL2 family. Part of the 50S ribosomal subunit.

It localises to the plastid. Its subcellular location is the chloroplast. In Tupiella akineta (Green alga), this protein is Large ribosomal subunit protein uL2c (rpl2).